The sequence spans 117 residues: Large ribosomal subunit protein eL22 (117 aa).

2 positions are modified to phosphoserine: Ser-49 and Ser-50.

This sequence belongs to the eukaryotic ribosomal protein eL22 family. Component of the large ribosomal subunit (LSU). Mature yeast ribosomes consist of a small (40S) and a large (60S) subunit. The 40S small subunit contains 1 molecule of ribosomal RNA (18S rRNA) and at least 33 different proteins. The large 60S subunit contains 3 rRNA molecules (25S, 5.8S and 5S rRNA) and at least 46 different proteins.

The protein resides in the cytoplasm. Its subcellular location is the nucleus. The protein localises to the nucleolus. Component of the ribosome, a large ribonucleoprotein complex responsible for the synthesis of proteins in the cell. The small ribosomal subunit (SSU) binds messenger RNAs (mRNAs) and translates the encoded message by selecting cognate aminoacyl-transfer RNA (tRNA) molecules. The large subunit (LSU) contains the ribosomal catalytic site termed the peptidyl transferase center (PTC), which catalyzes the formation of peptide bonds, thereby polymerizing the amino acids delivered by tRNAs into a polypeptide chain. The nascent polypeptides leave the ribosome through a tunnel in the LSU and interact with protein factors that function in enzymatic processing, targeting, and the membrane insertion of nascent chains at the exit of the ribosomal tunnel. In Schizosaccharomyces pombe (strain 972 / ATCC 24843) (Fission yeast), this protein is Large ribosomal subunit protein eL22 (rpl22).